The sequence spans 158 residues: NAD(P)H-quinone oxidoreductase subunit N (158 aa).

Belongs to the complex I NdhN subunit family. In terms of assembly, NDH-1 can be composed of about 15 different subunits; different subcomplexes with different compositions have been identified which probably have different functions.

It localises to the cellular thylakoid membrane. The catalysed reaction is a plastoquinone + NADH + (n+1) H(+)(in) = a plastoquinol + NAD(+) + n H(+)(out). It carries out the reaction a plastoquinone + NADPH + (n+1) H(+)(in) = a plastoquinol + NADP(+) + n H(+)(out). NDH-1 shuttles electrons from an unknown electron donor, via FMN and iron-sulfur (Fe-S) centers, to quinones in the respiratory and/or the photosynthetic chain. The immediate electron acceptor for the enzyme in this species is believed to be plastoquinone. Couples the redox reaction to proton translocation, and thus conserves the redox energy in a proton gradient. Cyanobacterial NDH-1 also plays a role in inorganic carbon-concentration. The chain is NAD(P)H-quinone oxidoreductase subunit N from Rippkaea orientalis (strain PCC 8801 / RF-1) (Cyanothece sp. (strain PCC 8801)).